Here is a 321-residue protein sequence, read N- to C-terminus: D-alanine--D-alanine ligase (321 aa).

The ATP-grasp domain maps to 121–315 (RIWFLTNNIN…FTNLIEEIIK (195 aa)). Residue 147–199 (PMKRPYVIKPLTQGSSIGVEVIFAEDDFNFADYDFPYGDQVIIEQYIKGRELQ) participates in ATP binding. Residues glutamate 268, glutamate 282, and asparagine 284 each coordinate Mg(2+).

It belongs to the D-alanine--D-alanine ligase family. The cofactor is Mg(2+). Mn(2+) serves as cofactor.

It is found in the cytoplasm. The catalysed reaction is 2 D-alanine + ATP = D-alanyl-D-alanine + ADP + phosphate + H(+). It functions in the pathway cell wall biogenesis; peptidoglycan biosynthesis. In terms of biological role, cell wall formation. This chain is D-alanine--D-alanine ligase, found in Rickettsia africae (strain ESF-5).